We begin with the raw amino-acid sequence, 535 residues long: Serum response factor-binding protein 1 (535 aa).

Coiled-coil stretches lie at residues 5–27 and 107–177; these read LNLN…LIIR and LKQK…EKCK. 6 stretches are compositionally biased toward basic and acidic residues: residues 128–151, 159–191, 205–325, 361–376, 406–432, and 460–472; these read AAEG…ETKK, KNTE…EKAL, AENK…ERPV, DKEK…ERFY, SDKD…EVQK, and TKRE…ERNK. 2 disordered regions span residues 128-435 and 453-535; these read AAEG…KEIP and TKPK…VFDD.

The protein resides in the cytoplasm. It is found in the perinuclear region. Its function is as follows. May be involved in regulating transcriptional activation of cardiac genes during the aging process. May play a role in biosynthesis and/or processing of SLC2A4 in adipose cells. The polypeptide is Serum response factor-binding protein 1 (Xenopus tropicalis (Western clawed frog)).